The chain runs to 784 residues: Ubiquitin carboxyl-terminal hydrolase 1 (784 aa).

Disordered stretches follow at residues Met1–Asn21 and Lys34–Glu56. Polar residues predominate over residues Ser7–Ser16. Phosphoserine is present on residues Ser16 and Ser42. Residues Asn45–Glu56 are compositionally biased toward basic and acidic residues. At Ser67 the chain carries Phosphoserine. One can recognise a USP domain in the interval Val81–Leu784. Cys90 (nucleophile) is an active-site residue. Basic and acidic residues-rich tracts occupy residues Val233–Thr243 and Asp252–Leu264. 2 disordered regions span residues Val233–Leu342 and Thr362–Asn414. Ser474 is modified (phosphoserine). His592 (proton acceptor) is an active-site residue. Residues Asn684–Met725 are disordered. Over residues Phe693 to Thr708 the composition is skewed to polar residues. The segment covering His709 to Ser718 has biased composition (basic and acidic residues). Ser767 carries the post-translational modification Phosphoserine.

Belongs to the peptidase C19 family. As to quaternary structure, interacts with FANCD2 and PCNA. Interacts with WDR48. Interacts with ATAD5; the interaction regulates USP1-mediated PCNA deubiquitination. In terms of processing, autocatalytic cleavage of USP1 following UV irradiation inactivates it, leading to an increase in ubiquitinated PCNA, recruitment of POLH and translesion synthesis. Post-translationally, ubiquitinated by the CRL2(KLHDC2) complex following autocatalytic cleavage, leading to its degradation: the CRL2(KLHDC2) complex recognizes the diglycine (Gly-Gly) at the C-terminus.

It is found in the nucleus. The enzyme catalyses Thiol-dependent hydrolysis of ester, thioester, amide, peptide and isopeptide bonds formed by the C-terminal Gly of ubiquitin (a 76-residue protein attached to proteins as an intracellular targeting signal).. In terms of biological role, negative regulator of DNA damage repair which specifically deubiquitinates monoubiquitinated FANCD2. Also involved in PCNA-mediated translesion synthesis (TLS) by deubiquitinating monoubiquitinated PCNA. Has almost no deubiquitinating activity by itself and requires the interaction with WDR48 to have a high activity. The protein is Ubiquitin carboxyl-terminal hydrolase 1 of Mus musculus (Mouse).